We begin with the raw amino-acid sequence, 77 residues long: Translation initiation factor IF-1, chloroplastic (77 aa).

Positions Met-1–Arg-71 constitute an S1-like domain.

This sequence belongs to the IF-1 family. In terms of assembly, component of the 30S ribosomal translation pre-initiation complex which assembles on the 30S ribosome in the order IF-2 and IF-3, IF-1 and N-formylmethionyl-tRNA(fMet); mRNA recruitment can occur at any time during PIC assembly.

The protein resides in the plastid. It localises to the chloroplast. Its function is as follows. One of the essential components for the initiation of protein synthesis. Stabilizes the binding of IF-2 and IF-3 on the 30S subunit to which N-formylmethionyl-tRNA(fMet) subsequently binds. Helps modulate mRNA selection, yielding the 30S pre-initiation complex (PIC). Upon addition of the 50S ribosomal subunit IF-1, IF-2 and IF-3 are released leaving the mature 70S translation initiation complex. The protein is Translation initiation factor IF-1, chloroplastic of Leucophyllum frutescens (Texas ranger).